The primary structure comprises 421 residues: Serine hydroxymethyltransferase (421 aa).

Residues leucine 120 and 124–126 each bind (6S)-5,6,7,8-tetrahydrofolate; that span reads GHL. The residue at position 229 (lysine 229) is an N6-(pyridoxal phosphate)lysine. 354–356 lines the (6S)-5,6,7,8-tetrahydrofolate pocket; that stretch reads SPF.

This sequence belongs to the SHMT family. In terms of assembly, homodimer. The cofactor is pyridoxal 5'-phosphate.

It localises to the cytoplasm. The enzyme catalyses (6R)-5,10-methylene-5,6,7,8-tetrahydrofolate + glycine + H2O = (6S)-5,6,7,8-tetrahydrofolate + L-serine. Its pathway is one-carbon metabolism; tetrahydrofolate interconversion. It functions in the pathway amino-acid biosynthesis; glycine biosynthesis; glycine from L-serine: step 1/1. Catalyzes the reversible interconversion of serine and glycine with tetrahydrofolate (THF) serving as the one-carbon carrier. This reaction serves as the major source of one-carbon groups required for the biosynthesis of purines, thymidylate, methionine, and other important biomolecules. Also exhibits THF-independent aldolase activity toward beta-hydroxyamino acids, producing glycine and aldehydes, via a retro-aldol mechanism. This is Serine hydroxymethyltransferase from Opitutus terrae (strain DSM 11246 / JCM 15787 / PB90-1).